A 148-amino-acid chain; its full sequence is Protein PLANT CADMIUM RESISTANCE 9 (148 aa).

Residues 59–78 (LAGLMVVAMSSIGCGWYYAS) traverse the membrane as a helical segment.

The protein belongs to the cornifelin family.

It localises to the membrane. May be involved in cadmium resistance. The sequence is that of Protein PLANT CADMIUM RESISTANCE 9 (PCR9) from Arabidopsis thaliana (Mouse-ear cress).